Here is a 367-residue protein sequence, read N- to C-terminus: Gelsolin-like protein 1 (367 aa).

Residues 1–185 (MATGLIKAKE…GQKQQIYVHE (185 aa)) are actin binding. Gelsolin-like repeat units lie at residues 56–141 (NFKV…ELFR) and 179–225 (QQIY…KAMQ). Positions 106-109 (DEYG) are actin-actin interfilament contact point. The actin binding, Actin-severing stretch occupies residues 186–295 (VPLVKERLDH…LKTTEVKRGA (110 aa)). The disordered stretch occupies residues 235-257 (PKAEAETLEDESTPESHKFYTSL). The Gelsolin-like 3 repeat unit spans residues 287–322 (KTTEVKRGAVNSKDFSSNDVFILDTGDQCFVWVGKG). An actin-severing, Ca-sensitive region spans residues 296–366 (VNSKDFSSND…LCKAFNVAIA (71 aa)).

Belongs to the villin/gelsolin family. As to quaternary structure, interacts with actin monomers and filaments. As to expression, expressed in circular and longitudinal muscle, pseudohearts, pharynx and gizzard. Also expressed in male germ cells at the proximal pole of primary spermatocytes in 16 cell-stage morulae, and in the distal parts of the spermatocytes in 32 and 64 cell-stage morulae. In the spermatids of the 128 cell-stage morulae it is expressed at the proximal pole of the elongated nucleus and the distal pole near the base of the flagellae.

The protein resides in the cytoplasm. It is found in the cytoskeleton. Functionally, calcium-regulated protein that binds to the plus (or barbed) ends of actin monomers or filaments, preventing monomer exchange (end-blocking or capping). Can promote the assembly of monomers into filaments (nucleation) as well as sever existing filaments. This chain is Gelsolin-like protein 1, found in Lumbricus terrestris (Common earthworm).